The following is a 203-amino-acid chain: Translation initiation factor IF-3 (203 aa).

Belongs to the IF-3 family. Monomer.

It localises to the cytoplasm. IF-3 binds to the 30S ribosomal subunit and shifts the equilibrium between 70S ribosomes and their 50S and 30S subunits in favor of the free subunits, thus enhancing the availability of 30S subunits on which protein synthesis initiation begins. The protein is Translation initiation factor IF-3 of Corynebacterium efficiens (strain DSM 44549 / YS-314 / AJ 12310 / JCM 11189 / NBRC 100395).